The sequence spans 737 residues: Oligopeptide transporter 3 (737 aa).

The next 16 helical transmembrane spans lie at Ala-45 to Tyr-65, Pro-69 to Ala-89, Val-117 to Ile-137, Phe-153 to Ile-173, Phe-215 to Ile-235, Val-255 to Ser-275, Ile-289 to Trp-309, Leu-357 to Thr-377, Trp-418 to Trp-438, Trp-446 to Ile-466, Ile-478 to Phe-498, Ala-532 to Leu-552, Val-604 to Phe-624, Trp-629 to Thr-649, Pro-650 to Tyr-670, and Val-681 to Leu-701.

Belongs to the oligopeptide OPT transporter (TC 2.A.67.1) family. Strong expression in flowers, leaves and roots. Preferentially expressed in the vascular tissues of seedlings and mature plants as well as in pollen and developing embryos.

It localises to the membrane. Its function is as follows. May be involved in the translocation of tetra- and pentapeptides across the cellular membrane in an energy-dependent manner. Also acts as a metal transporter that could be a component of the copper transport machinery. Essential for early embryo development. The protein is Oligopeptide transporter 3 (OPT3) of Arabidopsis thaliana (Mouse-ear cress).